The sequence spans 675 residues: Methionine--tRNA ligase (675 aa).

The 'HIGH' region motif lies at 15–25 (PYANGSIHLGH). 4 residues coordinate Zn(2+): Cys-146, Cys-149, Cys-159, and Cys-162. The short motif at 332–336 (KMSKS) is the 'KMSKS' region element. Lys-335 contributes to the ATP binding site. Residues 574 to 675 (DFAKLDLRIA…AGAKPGMRVK (102 aa)) enclose the tRNA-binding domain.

The protein belongs to the class-I aminoacyl-tRNA synthetase family. MetG type 1 subfamily. In terms of assembly, homodimer. It depends on Zn(2+) as a cofactor.

It is found in the cytoplasm. The enzyme catalyses tRNA(Met) + L-methionine + ATP = L-methionyl-tRNA(Met) + AMP + diphosphate. Is required not only for elongation of protein synthesis but also for the initiation of all mRNA translation through initiator tRNA(fMet) aminoacylation. The chain is Methionine--tRNA ligase from Tolumonas auensis (strain DSM 9187 / NBRC 110442 / TA 4).